A 373-amino-acid chain; its full sequence is Protein translocase subunit SecF (373 aa).

Helical transmembrane passes span 26–46 (IWYGISILITITAIVGLAVRG), 142–162 (WQGLGIFMVLVVIYLAIAFEW), 166–186 (LAAFVALIHDITITVGIYALV), 193–213 (GTVIGLLTILGYSLYDTVVVF), 251–271 (VVALLPVAGLLFIGGGVLGAG), and 280–300 (LFVGLAAGAYSSIFIATPLVA). The span at 322–332 (QGAAKGESAES) shows a compositional bias: low complexity. The segment at 322–373 (QGAAKGESAESAADEGAYDADEPDDAAPAVVGPRNQPASRGRGRGRPSGKRR) is disordered. Residues 333 to 346 (AADEGAYDADEPDD) are compositionally biased toward acidic residues. Over residues 362–373 (GRGRGRPSGKRR) the composition is skewed to basic residues.

The protein belongs to the SecD/SecF family. SecF subfamily. Forms a complex with SecD. Part of the essential Sec protein translocation apparatus which comprises SecA, SecYEG and auxiliary proteins SecDF. Other proteins may also be involved.

Its subcellular location is the cell membrane. In terms of biological role, part of the Sec protein translocase complex. Interacts with the SecYEG preprotein conducting channel. SecDF uses the proton motive force (PMF) to complete protein translocation after the ATP-dependent function of SecA. The polypeptide is Protein translocase subunit SecF (Streptomyces coelicolor (strain ATCC BAA-471 / A3(2) / M145)).